A 459-amino-acid chain; its full sequence is Protein BTN1 (459 aa).

11 helical membrane-spanning segments follow: residues 37-57 (VSVVIAFWLFGLINNILYVLV), 73-93 (AVLLADVLPSFLTKLVAPYFI), 102-122 (IAVFVALSCAGMLVVAAAPVE), 129-149 (LLGVVLASLSSGGGELSFLGL), 167-187 (GAGLVGAGLYVVLTGWIGLGV), 189-209 (GSLLVGALLPSVMVVAFWGIL), 240-260 (VPAGAASAGLLAPGPSVAATA), 283-303 (ALFFPYMLPLLLVYVAEYTIN), 325-342 (YYPFYGFLYQLGVFISRS), 352-372 (LYLPSFLQVANLVLLTLHAVL), and 374-394 (FIPSVYLVFVVIFWEGLLGGA).

This sequence belongs to the battenin family.

It is found in the vacuole membrane. Functionally, involved in vacuolar transport and vacuole pH homeostasis. Also required for cytokinesis. The protein is Protein BTN1 (BTN1) of Chaetomium globosum (strain ATCC 6205 / CBS 148.51 / DSM 1962 / NBRC 6347 / NRRL 1970) (Soil fungus).